Consider the following 381-residue polypeptide: Homoserine O-succinyltransferase (381 aa).

The AB hydrolase-1 domain occupies 45-360; sequence NAVLVCHALN…PHGHDAFLLD (316 aa). Serine 151 (nucleophile) is an active-site residue. Residue arginine 221 participates in substrate binding. Active-site residues include aspartate 321 and histidine 354. Substrate is bound at residue aspartate 355.

This sequence belongs to the AB hydrolase superfamily. MetX family. As to quaternary structure, homodimer.

It is found in the cytoplasm. The enzyme catalyses L-homoserine + succinyl-CoA = O-succinyl-L-homoserine + CoA. It participates in amino-acid biosynthesis; L-methionine biosynthesis via de novo pathway; O-succinyl-L-homoserine from L-homoserine: step 1/1. In terms of biological role, transfers a succinyl group from succinyl-CoA to L-homoserine, forming succinyl-L-homoserine. In Burkholderia mallei (strain NCTC 10247), this protein is Homoserine O-succinyltransferase.